Here is a 433-residue protein sequence, read N- to C-terminus: MELTLKLLVLLLFILNHHVGSGSIVKFLPGFEGPLPFELETGYIGIGEEEEVQLFYYFIKSERNPKEDPLLLWLSGGPGCSSITGLLFQNGPLALKSEVYNGSVPSLVSTTYSWTKTANIIFLDQPVGAGFSYSRAPLIDTPTDTGEVKRIHEFLQKWLSKHPQFSSNHFYAGGDSYSGMIVPALVQEISKGNYICCNPPINLKGYVLGNPITHEDDPNYRIPFSHGMALISDELYESIREACKGNYFNVDPRNTKCLKLVEEFHKCTDKLNEFHILSPDCDTASPDCYLYPFYLISFWANDESVRDALHVNKRSIGKWERCNYLSKPYNKDIKSSVPYHMNNSVSGYRSLIYSGDHDLVVPFLATQAWIKSLNYSIIDEWRPWMIRDQITGYTRTYSNKMTFATVKGSGHTAENKPQESFIMFRRWINGQPL.

The signal sequence occupies residues 1–21 (MELTLKLLVLLLFILNHHVGS). 3 disulfides stabilise this stretch: cysteine 80–cysteine 322, cysteine 243–cysteine 257, and cysteine 281–cysteine 288. The N-linked (GlcNAc...) asparagine glycan is linked to asparagine 101. Residue serine 176 is part of the active site. Residue asparagine 342 is glycosylated (N-linked (GlcNAc...) asparagine). Aspartate 358 is an active-site residue. N-linked (GlcNAc...) asparagine glycosylation occurs at asparagine 374. Histidine 411 is a catalytic residue.

The protein belongs to the peptidase S10 family. As to expression, ubiquitous.

The protein resides in the secreted. Probable carboxypeptidase. The sequence is that of Serine carboxypeptidase-like 11 (SCPL11) from Arabidopsis thaliana (Mouse-ear cress).